Consider the following 198-residue polypeptide: Ribonuclease HII (198 aa).

The RNase H type-2 domain occupies 10 to 198 (QLVAGVDEVG…PVKRALGLAS (189 aa)). The a divalent metal cation site is built by aspartate 16, glutamate 17, and aspartate 108.

Belongs to the RNase HII family. It depends on Mn(2+) as a cofactor. The cofactor is Mg(2+).

It is found in the cytoplasm. It carries out the reaction Endonucleolytic cleavage to 5'-phosphomonoester.. Endonuclease that specifically degrades the RNA of RNA-DNA hybrids. In Escherichia fergusonii (strain ATCC 35469 / DSM 13698 / CCUG 18766 / IAM 14443 / JCM 21226 / LMG 7866 / NBRC 102419 / NCTC 12128 / CDC 0568-73), this protein is Ribonuclease HII.